A 743-amino-acid polypeptide reads, in one-letter code: Catalase-peroxidase (743 aa).

The tract at residues M1 to P21 is disordered. The segment at residues W108 to Y231 is a cross-link (tryptophyl-tyrosyl-methioninium (Trp-Tyr) (with M-257)). Residue H109 is the Proton acceptor of the active site. A cross-link (tryptophyl-tyrosyl-methioninium (Tyr-Met) (with W-108)) is located at residues Y231 to M257. H272 contacts heme b. Positions G275–E296 are disordered.

This sequence belongs to the peroxidase family. Peroxidase/catalase subfamily. In terms of assembly, homodimer or homotetramer. Requires heme b as cofactor. In terms of processing, formation of the three residue Trp-Tyr-Met cross-link is important for the catalase, but not the peroxidase activity of the enzyme.

The catalysed reaction is H2O2 + AH2 = A + 2 H2O. It carries out the reaction 2 H2O2 = O2 + 2 H2O. Bifunctional enzyme with both catalase and broad-spectrum peroxidase activity. The chain is Catalase-peroxidase from Parafrankia sp. (strain EAN1pec).